Here is a 207-residue protein sequence, read N- to C-terminus: 5-amino-6-(5-phosphoribosylamino)uracil reductase (207 aa).

Serine 6 serves as a coordination point for substrate. NADP(+) is bound at residue tryptophan 8. Residue arginine 22 coordinates substrate. Residue aspartate 38 participates in NADP(+) binding. Substrate is bound by residues leucine 42 and arginine 45. Position 72 (serine 72) interacts with NADP(+). Glutamate 137 contributes to the substrate binding site.

This sequence belongs to the HTP reductase family.

The enzyme catalyses 5-amino-6-(5-phospho-D-ribitylamino)uracil + NADP(+) = 5-amino-6-(5-phospho-D-ribosylamino)uracil + NADPH + H(+). Its pathway is cofactor biosynthesis; riboflavin biosynthesis; 5-amino-6-(D-ribitylamino)uracil from GTP: step 3/4. The polypeptide is 5-amino-6-(5-phosphoribosylamino)uracil reductase (ribD2) (Buchnera aphidicola subsp. Acyrthosiphon pisum (strain APS) (Acyrthosiphon pisum symbiotic bacterium)).